Reading from the N-terminus, the 232-residue chain is 7-cyano-7-deazaguanine synthase (232 aa).

Residue 7–17 participates in ATP binding; sequence CSGGLDSVSLA. Residues cysteine 185, cysteine 193, cysteine 196, and cysteine 199 each contribute to the Zn(2+) site.

The protein belongs to the QueC family. Zn(2+) serves as cofactor.

It carries out the reaction 7-carboxy-7-deazaguanine + NH4(+) + ATP = 7-cyano-7-deazaguanine + ADP + phosphate + H2O + H(+). The protein operates within purine metabolism; 7-cyano-7-deazaguanine biosynthesis. Functionally, catalyzes the ATP-dependent conversion of 7-carboxy-7-deazaguanine (CDG) to 7-cyano-7-deazaguanine (preQ(0)). The protein is 7-cyano-7-deazaguanine synthase of Chelativorans sp. (strain BNC1).